The chain runs to 138 residues: Spermatid nuclear transition protein 4 (138 aa).

Basic and acidic residues predominate over residues 1-11; the sequence is AKVSRKPREPR. Positions 1–138 are disordered; it reads AKVSRKPREP…QGVTRRGRRY (138 aa). Position 4 is a phosphoserine; by PKC (S4). The short motif at 5-23 is the Nuclear localization signal element; that stretch reads RKPREPRTAVTQSTRRIKR. Basic residues-rich tracts occupy residues 19–34, 43–57, and 65–74; these read RRIK…RSRG, MKIK…RRKI, and KKAKKARKHF. The residue at position 26 (T26) is a Phosphothreonine; by PKA. The Nuclear localization signal signature appears at 54-72; sequence RRKIQTSAGQPKKAKKARK. Low complexity predominate over residues 86-101; the sequence is NKKTNQNKRQNQNKRQ. The span at 120–131 shows a compositional bias: polar residues; it reads PTTSCKWCSQGV.

The protein resides in the nucleus. It localises to the chromosome. Its function is as follows. Involved in nuclear basic protein transition: histones are replaced by spermatid specific proteins which are themselves replaced by protamines in late spermatids. The polypeptide is Spermatid nuclear transition protein 4 (TNP4) (Sus scrofa (Pig)).